Here is a 408-residue protein sequence, read N- to C-terminus: Na(+)-translocating NADH-quinone reductase subunit F (408 aa).

The helical transmembrane segment at 6-26 (IILGVVMFTAIVLALVAIILA) threads the bilayer. A 2Fe-2S ferredoxin-type domain is found at 35-127 (GDVTIRINGE…DMDVEVPEEV (93 aa)). [2Fe-2S] cluster contacts are provided by Cys70, Cys76, Cys79, and Cys111. One can recognise an FAD-binding FR-type domain in the interval 130–270 (VKAWECTVES…YGPFGEFFAK (141 aa)).

Belongs to the NqrF family. Composed of six subunits; NqrA, NqrB, NqrC, NqrD, NqrE and NqrF. [2Fe-2S] cluster serves as cofactor. FAD is required as a cofactor.

Its subcellular location is the cell inner membrane. It carries out the reaction a ubiquinone + n Na(+)(in) + NADH + H(+) = a ubiquinol + n Na(+)(out) + NAD(+). In terms of biological role, NQR complex catalyzes the reduction of ubiquinone-1 to ubiquinol by two successive reactions, coupled with the transport of Na(+) ions from the cytoplasm to the periplasm. The first step is catalyzed by NqrF, which accepts electrons from NADH and reduces ubiquinone-1 to ubisemiquinone by a one-electron transfer pathway. In Marinomonas sp. (strain MWYL1), this protein is Na(+)-translocating NADH-quinone reductase subunit F.